The following is a 318-amino-acid chain: Methionyl-tRNA formyltransferase (318 aa).

Position 112-115 (Ser112–Pro115) interacts with (6S)-5,6,7,8-tetrahydrofolate.

It belongs to the Fmt family.

The enzyme catalyses L-methionyl-tRNA(fMet) + (6R)-10-formyltetrahydrofolate = N-formyl-L-methionyl-tRNA(fMet) + (6S)-5,6,7,8-tetrahydrofolate + H(+). Functionally, attaches a formyl group to the free amino group of methionyl-tRNA(fMet). The formyl group appears to play a dual role in the initiator identity of N-formylmethionyl-tRNA by promoting its recognition by IF2 and preventing the misappropriation of this tRNA by the elongation apparatus. The sequence is that of Methionyl-tRNA formyltransferase from Shewanella frigidimarina (strain NCIMB 400).